The sequence spans 261 residues: Phosphate import ATP-binding protein PstB 1 (261 aa).

The 249-residue stretch at 8-256 folds into the ABC transporter domain; the sequence is IKVNNLSFYY…PHDSRTREYV (249 aa). ATP is bound at residue 40–47; it reads GPSGCGKS.

This sequence belongs to the ABC transporter superfamily. Phosphate importer (TC 3.A.1.7) family. The complex is composed of two ATP-binding proteins (PstB), two transmembrane proteins (PstC and PstA) and a solute-binding protein (PstS).

It localises to the cell inner membrane. It catalyses the reaction phosphate(out) + ATP + H2O = ADP + 2 phosphate(in) + H(+). Part of the ABC transporter complex PstSACB involved in phosphate import. Responsible for energy coupling to the transport system. The protein is Phosphate import ATP-binding protein PstB 1 of Nostoc sp. (strain PCC 7120 / SAG 25.82 / UTEX 2576).